The following is a 436-amino-acid chain: 3-ketoacyl-CoA thiolase (436 aa).

Cys99 acts as the Acyl-thioester intermediate in catalysis. Catalysis depends on proton acceptor residues His392 and Cys422.

Belongs to the thiolase-like superfamily. Thiolase family. Heterotetramer of two alpha chains (FadJ) and two beta chains (FadI).

It is found in the cytoplasm. The catalysed reaction is an acyl-CoA + acetyl-CoA = a 3-oxoacyl-CoA + CoA. It functions in the pathway lipid metabolism; fatty acid beta-oxidation. Functionally, catalyzes the final step of fatty acid oxidation in which acetyl-CoA is released and the CoA ester of a fatty acid two carbons shorter is formed. This is 3-ketoacyl-CoA thiolase from Escherichia coli O81 (strain ED1a).